A 583-amino-acid chain; its full sequence is ATP-dependent lipid A-core flippase (583 aa).

6 helical membrane-spanning segments follow: residues 32-52 (VAFL…TGFL), 71-91 (LHLL…AGFI), 115-135 (LMSL…TSKL), 160-180 (ILGM…IFAV), 259-279 (SMVV…YAVG), and 286-306 (FAAF…LTSL). One can recognise an ABC transmembrane type-1 domain in the interval 34 to 312 (FLISIIALVT…LTSLNEELQV (279 aa)). The region spanning 344–580 (IVFENVTLQY…DGHYAKLYRK (237 aa)) is the ABC transporter domain. Residue 378–385 (GRSGGGKT) coordinates ATP.

This sequence belongs to the ABC transporter superfamily. Lipid exporter (TC 3.A.1.106) family. As to quaternary structure, homodimer.

The protein localises to the cell inner membrane. It catalyses the reaction ATP + H2O + lipid A-core oligosaccharideSide 1 = ADP + phosphate + lipid A-core oligosaccharideSide 2.. Involved in lipopolysaccharide (LPS) biosynthesis. Translocates lipid A-core from the inner to the outer leaflet of the inner membrane. Transmembrane domains (TMD) form a pore in the inner membrane and the ATP-binding domain (NBD) is responsible for energy generation. The polypeptide is ATP-dependent lipid A-core flippase (Methylobacillus flagellatus (strain ATCC 51484 / DSM 6875 / VKM B-1610 / KT)).